We begin with the raw amino-acid sequence, 145 residues long: Peroxide operon regulator (145 aa).

The segment at 1–78 (MAAHELKEAL…SGLVKELTYG (78 aa)) is DNA-binding. Zn(2+)-binding residues include Cys96, Cys99, Cys136, and Cys139.

The protein belongs to the Fur family. Homodimer. The cofactor is Mn(2+). It depends on Fe(2+) as a cofactor. Zn(2+) serves as cofactor. Post-translationally, possibly oxidized on a cysteine residue; the Cys-SOH formed in response to oxidative signaling may rapidly react with a Cys-SH to form a disulfide bond, leading to the loss of metal ion and inactivation of repressor function. Oxidized PerR can be further reduced by thiol reductants and repressor activity restored.

The protein resides in the cytoplasm. Hydrogen and organic peroxide sensor. Represses the expression of a regulon of peroxide-inducible genes such as katA, ahpC, ahpF, the heme biosynthesis operon (hemAXCDBL), fur, perR, zosA and mrgA. This chain is Peroxide operon regulator (perR), found in Bacillus subtilis (strain 168).